The sequence spans 135 residues: MPGTERANRVATVLQWILNIGLMALAAILVIFLAKETFTLAGVLFDANQNASTYMLVEGIVIYFLYFEFIALIVKYFQSGYHFPLRYFIYIGITAIIRLIIVDHESPNDTLIYSFAILVLVIALYLANTDRLKRE.

A run of 4 helical transmembrane segments spans residues 13–33 (VLQWILNIGLMALAAILVIFL), 54–74 (YMLVEGIVIYFLYFEFIALIV), 82–102 (HFPLRYFIYIGITAIIRLIIV), and 107–127 (PNDTLIYSFAILVLVIALYLA).

This sequence belongs to the PsiE family.

It is found in the cell inner membrane. The polypeptide is Protein PsiE homolog (Edwardsiella ictaluri (strain 93-146)).